The following is a 143-amino-acid chain: uncharacterized protein (143 aa).

Residues 24–78 enclose the HTH cro/C1-type domain; the sequence is IRQRREWQNMSQTTLGEAIGVTFQQVQKYEKGVNRVGAGRLQQISKALKVEPSYF. The H-T-H motif DNA-binding region spans 35-54; that stretch reads QTTLGEAIGVTFQQVQKYEK.

This is an uncharacterized protein from Sinorhizobium fredii (strain NBRC 101917 / NGR234).